A 124-amino-acid polypeptide reads, in one-letter code: UPF0102 protein BL0935 (124 aa).

Belongs to the UPF0102 family.

This is UPF0102 protein BL0935 from Bifidobacterium longum (strain NCC 2705).